Here is a 331-residue protein sequence, read N- to C-terminus: CRISPR-associated endonuclease Cas1 (331 aa).

The Mn(2+) site is built by Glu-155, His-221, and Glu-236.

It belongs to the CRISPR-associated endonuclease Cas1 family. Homodimer, forms a heterotetramer with a Cas2 homodimer. Mg(2+) serves as cofactor. Requires Mn(2+) as cofactor.

Functionally, CRISPR (clustered regularly interspaced short palindromic repeat), is an adaptive immune system that provides protection against mobile genetic elements (viruses, transposable elements and conjugative plasmids). CRISPR clusters contain spacers, sequences complementary to antecedent mobile elements, and target invading nucleic acids. CRISPR clusters are transcribed and processed into CRISPR RNA (crRNA). Acts as a dsDNA endonuclease. Involved in the integration of spacer DNA into the CRISPR cassette. In Methanopyrus kandleri (strain AV19 / DSM 6324 / JCM 9639 / NBRC 100938), this protein is CRISPR-associated endonuclease Cas1.